A 352-amino-acid chain; its full sequence is A-type ATP synthase subunit C (352 aa).

This sequence belongs to the V-ATPase V0D/AC39 subunit family. As to quaternary structure, has multiple subunits with at least A(3), B(3), C, D, E, F, H, I and proteolipid K(x).

The protein localises to the cell membrane. Its function is as follows. Component of the A-type ATP synthase that produces ATP from ADP in the presence of a proton gradient across the membrane. The chain is A-type ATP synthase subunit C from Halobacterium salinarum (strain ATCC 29341 / DSM 671 / R1).